A 368-amino-acid polypeptide reads, in one-letter code: Quinolinate synthase (368 aa).

Residues histidine 46 and serine 63 each contribute to the iminosuccinate site. Cysteine 110 lines the [4Fe-4S] cluster pocket. Residues 141-143 and serine 162 each bind iminosuccinate; that span reads YVN. Cysteine 230 serves as a coordination point for [4Fe-4S] cluster. Iminosuccinate is bound by residues 256–258 and threonine 273; that span reads HPE. Cysteine 320 provides a ligand contact to [4Fe-4S] cluster.

It belongs to the quinolinate synthase family. Type 3 subfamily. Requires [4Fe-4S] cluster as cofactor.

The protein localises to the cytoplasm. The enzyme catalyses iminosuccinate + dihydroxyacetone phosphate = quinolinate + phosphate + 2 H2O + H(+). It functions in the pathway cofactor biosynthesis; NAD(+) biosynthesis; quinolinate from iminoaspartate: step 1/1. Its function is as follows. Catalyzes the condensation of iminoaspartate with dihydroxyacetone phosphate to form quinolinate. The protein is Quinolinate synthase of Bacillus cereus (strain G9842).